Reading from the N-terminus, the 180-residue chain is Large ribosomal subunit protein uL6 (180 aa).

The protein belongs to the universal ribosomal protein uL6 family. As to quaternary structure, part of the 50S ribosomal subunit.

Its function is as follows. This protein binds to the 23S rRNA, and is important in its secondary structure. It is located near the subunit interface in the base of the L7/L12 stalk, and near the tRNA binding site of the peptidyltransferase center. The polypeptide is Large ribosomal subunit protein uL6 (Clostridium tetani (strain Massachusetts / E88)).